The following is a 145-amino-acid chain: Anaerobic nitrite reductase NSHB5 (145 aa).

The region spanning 2-142 (GFSETQEELV…LAAAIKEEMK (141 aa)) is the Globin domain. Residues 35–39 (EIAPA) carry the Homodimerization motif. Heme b-binding residues include Ser45, His59, Lys61, Arg84, Thr88, and His89. The short motif at 96 to 108 (DAHFEVVKTALLD) is the Homodimerization element.

This sequence belongs to the plant globin family. In terms of assembly, homodimer. Requires heme b as cofactor. As to expression, expressed in embryonic (embryos, coleoptiles and seminal roots) and vegetative (leaves and roots) organs.

The protein resides in the cytoplasm. Its subcellular location is the nucleus. The enzyme catalyses Fe(III)-heme b-[protein] + nitric oxide + H2O = Fe(II)-heme b-[protein] + nitrite + 2 H(+). Phytoglobin that reduces nitrite to nitric oxide under anoxic conditions (e.g. during flooding or in waterlogged soil). May not function as an oxygen storage or transport protein. Has an unusually high affinity for O(2) through an hexacoordinate heme iron because of a very low dissociation constant. The protein is Anaerobic nitrite reductase NSHB5 of Oryza sativa subsp. indica (Rice).